We begin with the raw amino-acid sequence, 189 residues long: ATP synthase subunit delta (189 aa).

Belongs to the ATPase delta chain family. In terms of assembly, F-type ATPases have 2 components, F(1) - the catalytic core - and F(0) - the membrane proton channel. F(1) has five subunits: alpha(3), beta(3), gamma(1), delta(1), epsilon(1). F(0) has three main subunits: a(1), b(2) and c(10-14). The alpha and beta chains form an alternating ring which encloses part of the gamma chain. F(1) is attached to F(0) by a central stalk formed by the gamma and epsilon chains, while a peripheral stalk is formed by the delta and b chains.

Its subcellular location is the cell inner membrane. Functionally, f(1)F(0) ATP synthase produces ATP from ADP in the presence of a proton or sodium gradient. F-type ATPases consist of two structural domains, F(1) containing the extramembraneous catalytic core and F(0) containing the membrane proton channel, linked together by a central stalk and a peripheral stalk. During catalysis, ATP synthesis in the catalytic domain of F(1) is coupled via a rotary mechanism of the central stalk subunits to proton translocation. Its function is as follows. This protein is part of the stalk that links CF(0) to CF(1). It either transmits conformational changes from CF(0) to CF(1) or is implicated in proton conduction. The sequence is that of ATP synthase subunit delta from Rickettsia bellii (strain OSU 85-389).